The following is a 422-amino-acid chain: Beclin-1-like protein (422 aa).

Positions 119 to 243 (MLEIMDRELR…KQQLDKLRDT (125 aa)) form a coiled coil. Positions 182 to 201 (QSLNDAIAEEEQEREELHEQ) are disordered.

This sequence belongs to the beclin family. As to quaternary structure, interacts with Rab18, preferentially binding to the GTP-bound form.

Functionally, plays a central role in autophagy. This Drosophila melanogaster (Fruit fly) protein is Beclin-1-like protein.